The chain runs to 2327 residues: Acetyl-CoA carboxylase 2 (2327 aa).

Residues 1-62 (MTSTHVATLG…NGGVSDSKKL (62 aa)) are disordered. Residues 134 to 641 (PIHSVLVANN…HTGWLDTRIA (508 aa)) enclose the Biotin carboxylation domain. The ATP-grasp domain maps to 287 to 481 (ECCLDSIPDE…AAQVAVGMGI (195 aa)). An ATP-binding site is contributed by 313 to 370 (CQVVGYPAMIKASWGGGGKGIRKVHNDDEVRTLFKQVQGEVPGSPIFIMRLAAQSRHL). Positions 436, 450, and 452 each coordinate Mg(2+). Mn(2+)-binding residues include Glu-436, Glu-450, and Asn-452. Arg-454 is a catalytic residue. In terms of domain architecture, Biotinyl-binding spans 768 to 842 (LQNDHDPSKL…QAGDLIARLD (75 aa)). Position 809 is an N6-biotinyllysine (Lys-809). In terms of domain architecture, CoA carboxyltransferase N-terminal spans 1568-1909 (PYQPLSVIDL…YIGGPLPVTT (342 aa)). The interval 1568–2227 (PYQPLSVIDL…EDVLAKEIRA (660 aa)) is carboxyltransferase. The CoA site is built by Arg-1818, Lys-2119, and Arg-2121. One can recognise a CoA carboxyltransferase C-terminal domain in the interval 1913–2227 (PPDRPVAYIP…EDVLAKEIRA (315 aa)).

In terms of assembly, homodimer. Biotin serves as cofactor. The cofactor is Mg(2+). Mn(2+) is required as a cofactor.

The protein localises to the cytoplasm. Its subcellular location is the cytosol. The enzyme catalyses hydrogencarbonate + acetyl-CoA + ATP = malonyl-CoA + ADP + phosphate + H(+). It carries out the reaction N(6)-biotinyl-L-lysyl-[protein] + hydrogencarbonate + ATP = N(6)-carboxybiotinyl-L-lysyl-[protein] + ADP + phosphate + H(+). It functions in the pathway lipid metabolism; malonyl-CoA biosynthesis; malonyl-CoA from acetyl-CoA: step 1/1. In terms of biological role, multifunctional enzyme that catalyzes the carboxylation of acetyl-CoA, forming malonyl-CoA, which is used in the plastid for fatty acid synthesis and in the cytosol in various biosynthetic pathways including fatty acid elongation. This Oryza sativa subsp. japonica (Rice) protein is Acetyl-CoA carboxylase 2 (ACC2).